A 557-amino-acid chain; its full sequence is ADP-ribosylation factor-binding protein GGA1 (557 aa).

The 137-residue stretch at 29 to 165 (ACRSTLPEPD…LLKYKGYTFP (137 aa)) folds into the VHS domain. Residues 192–317 (ERAQAAKLEE…LLKRYKSIKG (126 aa)) enclose the GAT domain. A Phosphothreonine modification is found at Thr348. Residues Ser353, Ser357, Ser378, and Ser394 each carry the phosphoserine modification. Residues 440 to 556 (AQSQRHILNQ…EESGTTSLPT (117 aa)) enclose the GAE domain.

As to quaternary structure, binds to ARF1 and ARF2.

The protein localises to the golgi apparatus. The protein resides in the trans-Golgi network. In terms of biological role, may play a role in the regulation of membrane traffic through the trans-Golgi network. The protein is ADP-ribosylation factor-binding protein GGA1 (GGA1) of Saccharomyces cerevisiae (strain ATCC 204508 / S288c) (Baker's yeast).